An 859-amino-acid chain; its full sequence is Magnesium transporter ALR1 (859 aa).

A compositionally biased stretch (low complexity) spans 1 to 20; it reads MSSSSSSSESSPNLSRSNSL. Disordered stretches follow at residues 1 to 281 and 330 to 399; these read MSSS…MPPQ and TSST…NIPS. Ser2 carries the N-acetylserine modification. Basic and acidic residues-rich tracts occupy residues 28 to 42 and 55 to 73; these read KTED…RQHP and KNKE…EQKS. Phosphotyrosine is present on Tyr77. Residue Ser85 is modified to Phosphoserine. A compositionally biased stretch (basic and acidic residues) spans 144-154; it reads PPKDVGVKRDY. Residues 157-176 show a composition bias toward low complexity; sequence SSSTASSGNKSKLSASSSAS. 2 positions are modified to phosphoserine: Ser185 and Ser188. Residues 193 to 203 are compositionally biased toward basic and acidic residues; the sequence is IPHESKSDTHS. Positions 213-235 are enriched in polar residues; sequence YSTTSAHSSINPAVLLTKSTSQK. Ser220, Ser221, and Ser236 each carry phosphoserine. Thr242 is subject to Phosphothreonine. Over residues 252 to 265 the composition is skewed to polar residues; it reads TRASFDSDVSQASR. Residues 330-339 are compositionally biased toward low complexity; the sequence is TSSTSTSGSS. Positions 353–375 are enriched in basic and acidic residues; that stretch reads EKSESTNETEIHEKKEDEHEKIK. Transmembrane regions (helical) follow at residues 744–764 and 773–793; these read TMIG…GMNV and IAWW…GWFL. A disordered region spans residues 830–859; the sequence is FNDRSKNINVRAGPSNKSVASLPSRYSRYD. Residue Ser850 is modified to Phosphoserine.

Belongs to the CorA metal ion transporter (MIT) (TC 1.A.35) family.

It localises to the cell membrane. Functionally, plasma membrane magnesium transporter. The protein is Magnesium transporter ALR1 (ALR1) of Saccharomyces cerevisiae (strain ATCC 204508 / S288c) (Baker's yeast).